The following is a 131-amino-acid chain: Fumarate reductase subunit C (131 aa).

Transmembrane regions (helical) follow at residues 30–50, 61–81, and 110–130; these read EGTA…LFAL, IGFL…AAAL, and IKGL…VALF.

Belongs to the FrdC family. As to quaternary structure, part of an enzyme complex containing four subunits: a flavoprotein (FrdA), an iron-sulfur protein (FrdB), and two hydrophobic anchor proteins (FrdC and FrdD).

It is found in the cell inner membrane. Functionally, two distinct, membrane-bound, FAD-containing enzymes are responsible for the catalysis of fumarate and succinate interconversion; fumarate reductase is used in anaerobic growth, and succinate dehydrogenase is used in aerobic growth. Anchors the catalytic components of the fumarate reductase complex to the cell inner membrane, binds quinones. The protein is Fumarate reductase subunit C of Klebsiella pneumoniae subsp. pneumoniae (strain ATCC 700721 / MGH 78578).